Consider the following 135-residue polypeptide: C-type Lectin CRL (135 aa).

Intrachain disulfides connect Cys-3–Cys-14, Cys-31–Cys-131, Cys-38–Cys-133, and Cys-106–Cys-123. The region spanning 10-132 (MNGLCYKIFN…CESKDAFLCQ (123 aa)) is the C-type lectin domain. 5 residues coordinate Ca(2+): Gln-96, Asp-98, Glu-104, Asn-119, and Asp-120. The short motif at 96 to 98 (QPD) is the Galactose-binding element.

This sequence belongs to the true venom lectin family. Homodimer; disulfide-linked. In terms of tissue distribution, expressed by the venom gland.

Its subcellular location is the secreted. Functionally, beta-galactoside and N-acetylgalactosamine (GalNAc) specific C-type lectin. The sequence is that of C-type Lectin CRL from Crotalus ruber ruber (Red diamond rattlesnake).